The following is a 343-amino-acid chain: MEVDPQLRFLLKPILEWLDDPKTEEIAINRPGEAFVRQAGIFTKMPLPVSYDDLEDIAILAGALRKQDVGPRNPLCATELPGGERLQICLPPTVPSGTVSLTIRRPSSRVSGLKEVSSRYDASRWNQWQTRRKRQNQDDEAILQHFDNGDLEAFLHACVVSRLTMLLCGPTGSGKTTMSKTLISAIPPQERLITIEDTLELVIPHDNHVRLLYSKNGAGLGAVSAEHLLQASLRMRPDRILLGEMRDDAAWAYLSEVVSGHPGSISTIHGANPIQGFKKLFSLVKSSVQGASLEDRTLIDMLSTAIDVIIPFRAYEDVYEVGEIWLAADARRRGETIGDLLNQ.

An ATP-binding site is contributed by 169–176; that stretch reads GPTGSGKT.

It belongs to the GSP E family. In terms of processing, autophosphorylated.

The protein localises to the cytoplasm. Functionally, required for the transfer of T-DNA to plants. Couples energy, by means of ATP hydrolysis, to T-DNA transport. In Agrobacterium tumefaciens (strain 15955), this protein is Protein VirB11 (virB11).